The chain runs to 115 residues: Cytochrome c (115 aa).

Heme c-binding residues include C26, C29, H30, and M91.

This sequence belongs to the cytochrome c family. In terms of processing, binds 1 heme c group covalently per subunit.

It is found in the mitochondrion intermembrane space. Functionally, electron carrier protein. The oxidized form of the cytochrome c heme group can accept an electron from the heme group of the cytochrome c1 subunit of cytochrome reductase. Cytochrome c then transfers this electron to the cytochrome oxidase complex, the final protein carrier in the mitochondrial electron-transport chain. The polypeptide is Cytochrome c (Theileria parva (East coast fever infection agent)).